The primary structure comprises 170 residues: Nicotinamide-nucleotide adenylyltransferase (170 aa).

This sequence belongs to the archaeal NMN adenylyltransferase family.

The protein resides in the cytoplasm. It catalyses the reaction beta-nicotinamide D-ribonucleotide + ATP + H(+) = diphosphate + NAD(+). Its pathway is cofactor biosynthesis; NAD(+) biosynthesis; NAD(+) from nicotinamide D-ribonucleotide: step 1/1. The chain is Nicotinamide-nucleotide adenylyltransferase from Methanothrix thermoacetophila (strain DSM 6194 / JCM 14653 / NBRC 101360 / PT) (Methanosaeta thermophila).